The chain runs to 66 residues: Conotoxin Cl14.1a (66 aa).

The signal sequence occupies residues 1-19 (MNVTAMFIVLLLTMPLTDG). Positions 20 to 49 (FNIRAINGGELFGLVQRDAGNALDHGFYRR) are excised as a propeptide.

It belongs to the conotoxin L superfamily. Post-translationally, contains 2 disulfide bonds. As to expression, expressed by the venom duct.

It localises to the secreted. Functionally, probable neurotoxin with unknown target. Possibly targets ion channels. This peptide could be considered as an apoptosis activator in some cancers (tested on lung and breast cancer cell lines). Provokes the decrease of H1299 lung cancer cells viability after 24 hours treatment, and induces a high Bax/Bcl-2 ratio, which suggests that this peptide can activate apoptosis in H1299 cells. In addition, H1299 and H1437 lung cancer cell lines treated with this peptide have decreased cell viability, activated caspases, and reduced expression of the pro-survival protein NF-kappa-B (NFKB1), indicating activation of apoptosis. In synergy with MicroRNA-101-3p, this synthetic peptide inhibits breast cancer cells (SK-BR-3 and MCF-7) migration, invasion, and proliferation through suppressing the expression of the methyltransferase EZH2. In parallel, this synergy treatment is able to promote the apoptosis of breast cancer cells. Against microbes, this synthetic toxin (at micromolar concentrations) lowers viability and inhibits host cell invasion by the opportunistic parasite Toxoplasma gondii (tachyzoite form). In addition, it permits T.gondii intracellular replication to decrease while viability of the host cell is unaffected. This chain is Conotoxin Cl14.1a, found in Californiconus californicus (California cone).